A 341-amino-acid polypeptide reads, in one-letter code: L-threonine 3-dehydrogenase (341 aa).

A Zn(2+)-binding site is contributed by cysteine 38. Residues threonine 40 and histidine 43 each act as charge relay system in the active site. The Zn(2+) site is built by histidine 63, glutamate 64, cysteine 93, cysteine 96, cysteine 99, and cysteine 107. Residues isoleucine 175, aspartate 195, arginine 200, 262–264, and 286–287 contribute to the NAD(+) site; these read LGI and IY.

This sequence belongs to the zinc-containing alcohol dehydrogenase family. As to quaternary structure, homotetramer. Requires Zn(2+) as cofactor.

The protein resides in the cytoplasm. It catalyses the reaction L-threonine + NAD(+) = (2S)-2-amino-3-oxobutanoate + NADH + H(+). Its pathway is amino-acid degradation; L-threonine degradation via oxydo-reductase pathway; glycine from L-threonine: step 1/2. Its function is as follows. Catalyzes the NAD(+)-dependent oxidation of L-threonine to 2-amino-3-ketobutyrate. The polypeptide is L-threonine 3-dehydrogenase (Enterobacter sp. (strain 638)).